The sequence spans 504 residues: ATP synthase subunit alpha, chloroplastic (504 aa).

Residue 170 to 177 coordinates ATP; the sequence is GDRQTGKT.

This sequence belongs to the ATPase alpha/beta chains family. F-type ATPases have 2 components, CF(1) - the catalytic core - and CF(0) - the membrane proton channel. CF(1) has five subunits: alpha(3), beta(3), gamma(1), delta(1), epsilon(1). CF(0) has four main subunits: a, b, b' and c.

It is found in the plastid. The protein localises to the chloroplast thylakoid membrane. It carries out the reaction ATP + H2O + 4 H(+)(in) = ADP + phosphate + 5 H(+)(out). Functionally, produces ATP from ADP in the presence of a proton gradient across the membrane. The alpha chain is a regulatory subunit. The polypeptide is ATP synthase subunit alpha, chloroplastic (Porphyra purpurea (Red seaweed)).